Here is a 458-residue protein sequence, read N- to C-terminus: tRNA modification GTPase MnmE (458 aa).

3 residues coordinate (6S)-5-formyl-5,6,7,8-tetrahydrofolate: Arg-26, Glu-88, and Arg-127. Residues Gly-224–Phe-378 enclose the TrmE-type G domain. Residue Asn-234 participates in K(+) binding. GTP is bound by residues Asn-234 to Ser-239, Thr-253 to Thr-259, and Asp-278 to Gly-281. Residue Ser-238 participates in Mg(2+) binding. Residues Thr-253, Ile-255, and Thr-258 each contribute to the K(+) site. A Mg(2+)-binding site is contributed by Thr-259. Lys-458 is a (6S)-5-formyl-5,6,7,8-tetrahydrofolate binding site.

The protein belongs to the TRAFAC class TrmE-Era-EngA-EngB-Septin-like GTPase superfamily. TrmE GTPase family. In terms of assembly, homodimer. Heterotetramer of two MnmE and two MnmG subunits. K(+) serves as cofactor.

It localises to the cytoplasm. Functionally, exhibits a very high intrinsic GTPase hydrolysis rate. Involved in the addition of a carboxymethylaminomethyl (cmnm) group at the wobble position (U34) of certain tRNAs, forming tRNA-cmnm(5)s(2)U34. The polypeptide is tRNA modification GTPase MnmE (Streptococcus pyogenes serotype M4 (strain MGAS10750)).